A 103-amino-acid polypeptide reads, in one-letter code: Putative glutaredoxin-C14 (103 aa).

A Glutaredoxin domain is found at 1 to 102 (MDRVMKLASE…PMLKNAGALW (102 aa)). Cys-21 and Cys-24 form a disulfide bridge. The Responsive for interaction with TGA factors signature appears at 100 to 103 (ALWL).

The protein belongs to the glutaredoxin family. CC-type subfamily.

The protein resides in the cytoplasm. The protein localises to the nucleus. In terms of biological role, has a glutathione-disulfide oxidoreductase activity in the presence of NADPH and glutathione reductase. Reduces low molecular weight disulfides and proteins. The sequence is that of Putative glutaredoxin-C14 (GRXC14) from Oryza sativa subsp. japonica (Rice).